Reading from the N-terminus, the 248-residue chain is Tyrosine recombinase XerD-like (248 aa).

The 72-residue stretch at 1–72 (MIAFIEPFLA…TVNQFLYYLY (72 aa)) folds into the Core-binding (CB) domain. One can recognise a Tyr recombinase domain in the interval 92–248 (SLKPQLTRLD…PITLEKYYKM (157 aa)). Residue arginine 213 is part of the active site. Tyrosine 245 serves as the catalytic O-(3'-phospho-DNA)-tyrosine intermediate.

This sequence belongs to the 'phage' integrase family. XerD-like subfamily.

It is found in the cytoplasm. Functionally, putative tyrosine recombinase. Not involved in the cutting and rejoining of the recombining DNA molecules on dif(SL) site. The sequence is that of Tyrosine recombinase XerD-like from Streptococcus equi subsp. zooepidemicus (strain H70).